The primary structure comprises 382 residues: D-galactonate dehydratase (382 aa).

D183 is a binding site for Mg(2+). H185 acts as the Proton donor in catalysis. Residues E209 and E235 each coordinate Mg(2+). The active-site Proton acceptor is H285.

This sequence belongs to the mandelate racemase/muconate lactonizing enzyme family. GalD subfamily. Requires Mg(2+) as cofactor.

It carries out the reaction D-galactonate = 2-dehydro-3-deoxy-D-galactonate + H2O. It functions in the pathway carbohydrate acid metabolism; D-galactonate degradation; D-glyceraldehyde 3-phosphate and pyruvate from D-galactonate: step 1/3. Catalyzes the dehydration of D-galactonate to 2-keto-3-deoxy-D-galactonate. In Verminephrobacter eiseniae (strain EF01-2), this protein is D-galactonate dehydratase.